Reading from the N-terminus, the 159-residue chain is NADH-quinone oxidoreductase subunit B (159 aa).

Residues Cys-37, Cys-38, Cys-102, and Cys-132 each coordinate [4Fe-4S] cluster.

It belongs to the complex I 20 kDa subunit family. In terms of assembly, NDH-1 is composed of 14 different subunits. Subunits NuoB, C, D, E, F, and G constitute the peripheral sector of the complex. [4Fe-4S] cluster serves as cofactor.

It localises to the cell inner membrane. The catalysed reaction is a quinone + NADH + 5 H(+)(in) = a quinol + NAD(+) + 4 H(+)(out). Its function is as follows. NDH-1 shuttles electrons from NADH, via FMN and iron-sulfur (Fe-S) centers, to quinones in the respiratory chain. Couples the redox reaction to proton translocation (for every two electrons transferred, four hydrogen ions are translocated across the cytoplasmic membrane), and thus conserves the redox energy in a proton gradient. The sequence is that of NADH-quinone oxidoreductase subunit B from Ruthia magnifica subsp. Calyptogena magnifica.